The primary structure comprises 120 residues: Large ribosomal subunit protein uL18 (120 aa).

Belongs to the universal ribosomal protein uL18 family. In terms of assembly, part of the 50S ribosomal subunit; part of the 5S rRNA/L5/L18/L25 subcomplex. Contacts the 5S and 23S rRNAs.

Functionally, this is one of the proteins that bind and probably mediate the attachment of the 5S RNA into the large ribosomal subunit, where it forms part of the central protuberance. This chain is Large ribosomal subunit protein uL18, found in Methylorubrum extorquens (strain CM4 / NCIMB 13688) (Methylobacterium extorquens).